The primary structure comprises 395 residues: S-adenosylmethionine synthase (395 aa).

Residue H12 participates in ATP binding. D14 contributes to the Mg(2+) binding site. Residue E40 participates in K(+) binding. Residues E53 and Q96 each coordinate L-methionine. The segment at 96–106 (QSKEIADAVNF) is flexible loop. ATP-binding positions include 174–176 (DGK), 242–243 (RF), D251, 257–258 (RK), A274, and K278. L-methionine is bound at residue D251. K282 contacts L-methionine.

This sequence belongs to the AdoMet synthase family. Homotetramer; dimer of dimers. Mg(2+) serves as cofactor. Requires K(+) as cofactor.

It is found in the cytoplasm. The catalysed reaction is L-methionine + ATP + H2O = S-adenosyl-L-methionine + phosphate + diphosphate. Its pathway is amino-acid biosynthesis; S-adenosyl-L-methionine biosynthesis; S-adenosyl-L-methionine from L-methionine: step 1/1. Catalyzes the formation of S-adenosylmethionine (AdoMet) from methionine and ATP. The overall synthetic reaction is composed of two sequential steps, AdoMet formation and the subsequent tripolyphosphate hydrolysis which occurs prior to release of AdoMet from the enzyme. In Tropheryma whipplei (strain Twist) (Whipple's bacillus), this protein is S-adenosylmethionine synthase.